The following is a 138-amino-acid chain: MFDIGFSELLLIAVVALVVLGPERLPKAARFAGLLVRRARTQWESIKQELERELEAEALKRNLQNAQQVIHDAQAQLQSNQQDMDIQNSISILHEQTKRDIHPDHDTNTLEPSTAVHHVHVPPPSTSTHGNNGQEKSQ.

Residues 1–21 form a helical membrane-spanning segment; sequence MFDIGFSELLLIAVVALVVLG. The interval 116–138 is disordered; the sequence is VHHVHVPPPSTSTHGNNGQEKSQ. Polar residues predominate over residues 126–138; sequence TSTHGNNGQEKSQ.

The protein belongs to the TatB family. In terms of assembly, the Tat system comprises two distinct complexes: a TatABC complex, containing multiple copies of TatA, TatB and TatC subunits, and a separate TatA complex, containing only TatA subunits. Substrates initially bind to the TatABC complex, which probably triggers association of the separate TatA complex to form the active translocon.

The protein localises to the cell inner membrane. In terms of biological role, part of the twin-arginine translocation (Tat) system that transports large folded proteins containing a characteristic twin-arginine motif in their signal peptide across membranes. Together with TatC, TatB is part of a receptor directly interacting with Tat signal peptides. TatB may form an oligomeric binding site that transiently accommodates folded Tat precursor proteins before their translocation. This is Sec-independent protein translocase protein TatB from Xylella fastidiosa (strain Temecula1 / ATCC 700964).